The primary structure comprises 459 residues: 1,3-beta-glucanosyltransferase gas2 (459 aa).

The first 19 residues, 1 to 19 (MVSFTKFTLQLLSASAAFA), serve as a signal peptide directing secretion. 2 N-linked (GlcNAc...) asparagine glycosylation sites follow: Asn34 and Asn68. Cys69 and Cys98 form a disulfide bridge. Position 87 (Tyr87) interacts with (1,3-beta-D-glucosyl)n. 3 N-linked (GlcNAc...) asparagine glycosylation sites follow: Asn90, Asn104, and Asn146. Positions 155 and 156 each coordinate (1,3-beta-D-glucosyl)n. Glu156 functions as the Proton donor in the catalytic mechanism. The N-linked (GlcNAc...) asparagine glycan is linked to Asn160. (1,3-beta-D-glucosyl)n-binding residues include Asp197 and Arg202. 2 disulfides stabilise this stretch: Cys211-Cys350 and Cys235-Cys266. N-linked (GlcNAc...) asparagine glycans are attached at residues Asn212, Asn218, and Asn254. The Nucleophile role is filled by Glu263. Residue Asn284 is glycosylated (N-linked (GlcNAc...) asparagine). A (1,3-beta-D-glucosyl)n-binding site is contributed by Tyr295. Residues Asn308, Asn334, Asn344, Asn354, and Asn370 are each glycosylated (N-linked (GlcNAc...) asparagine). 3 disulfides stabilise this stretch: Cys374-Cys427, Cys383-Cys449, and Cys402-Cys409. Residue Asn423 is glycosylated (N-linked (GlcNAc...) asparagine).

The protein belongs to the glycosyl hydrolase 72 family.

It localises to the endoplasmic reticulum lumen. Its subcellular location is the secreted. In terms of biological role, splits internally a 1,3-beta-glucan molecule and transfers the newly generated reducing end (the donor) to the non-reducing end of another 1,3-beta-glucan molecule (the acceptor) forming a 1,3-beta linkage, resulting in the elongation of 1,3-beta-glucan chains in the cell wall. In Schizosaccharomyces pombe (strain 972 / ATCC 24843) (Fission yeast), this protein is 1,3-beta-glucanosyltransferase gas2 (gas2).